The primary structure comprises 304 residues: Uricase (304 aa).

Position 2 is an N-acetylalanine (Ala2). N6-acetyllysine; alternate occurs at positions 10 and 23. N6-succinyllysine; alternate is present on residues Lys10 and Lys23. Lys23 functions as the Charge relay system in the catalytic mechanism. N6-acetyllysine is present on residues Lys27 and Lys36. Residues Ser39 and Ser63 each carry the phosphoserine modification. Thr68 serves as the catalytic Charge relay system. Urate-binding residues include Thr68 and Asp69. Lys118, Lys122, and Lys164 each carry N6-acetyllysine. Residue Phe170 participates in urate binding. N6-acetyllysine occurs at positions 175 and 185. Arg187 is a urate binding site. Lys221 and Lys228 each carry N6-acetyllysine; alternate. Residues Lys221 and Lys228 each carry the N6-succinyllysine; alternate modification. Position 232 is a phosphoserine (Ser232). Positions 235, 236, and 262 each coordinate urate. His264 functions as the Charge relay system in the catalytic mechanism. N6-acetyllysine is present on Lys278. Residue Tyr289 is modified to Phosphotyrosine. The Microbody targeting signal signature appears at 302–304; sequence SRL.

It belongs to the uricase family.

The protein localises to the peroxisome. It carries out the reaction urate + O2 + H2O = 5-hydroxyisourate + H2O2. Its pathway is purine metabolism; urate degradation; (S)-allantoin from urate: step 1/3. In terms of biological role, catalyzes the oxidation of uric acid to 5-hydroxyisourate, which is further processed to form (S)-allantoin. This is Uricase (UOX) from Macaca mulatta (Rhesus macaque).